The chain runs to 35 residues: Photosystem II reaction center protein T (35 aa).

Residues 3–23 form a helical membrane-spanning segment; that stretch reads ALVYTFLLISTLGIIFFAIFF.

Belongs to the PsbT family. As to quaternary structure, PSII is composed of 1 copy each of membrane proteins PsbA, PsbB, PsbC, PsbD, PsbE, PsbF, PsbH, PsbI, PsbJ, PsbK, PsbL, PsbM, PsbT, PsbY, PsbZ, Psb30/Ycf12, at least 3 peripheral proteins of the oxygen-evolving complex and a large number of cofactors. It forms dimeric complexes.

The protein resides in the plastid. It is found in the chloroplast thylakoid membrane. In terms of biological role, found at the monomer-monomer interface of the photosystem II (PS II) dimer, plays a role in assembly and dimerization of PSII. PSII is a light-driven water plastoquinone oxidoreductase, using light energy to abstract electrons from H(2)O, generating a proton gradient subsequently used for ATP formation. This Aristolochia macrophylla (Dutchman's pipe vine) protein is Photosystem II reaction center protein T.